The sequence spans 206 residues: Translocation protein SEC66 (206 aa).

The Lumenal segment spans residues methionine 1–serine 27. Residues asparagine 5 and asparagine 12 are each glycosylated (N-linked (GlcNAc...) asparagine). A helical; Signal-anchor for type II membrane protein membrane pass occupies residues isoleucine 28 to alanine 48. Over serine 49–asparagine 206 the chain is Cytoplasmic.

This sequence to S.pombe SpBC409.21. As to quaternary structure, component of the heterotetrameric Sec62/63complex composed of SEC62, SEC63, SEC66 and SEC72. The Sec62/63 complex associates with the Sec61 complex to form the Sec complex. Part of a complex consisting of KAR2, SEC63, SEC66 and SEC72.

The protein resides in the endoplasmic reticulum membrane. Functionally, acts as a component of the Sec62/63 complex which is involved in SRP-independent post-translational translocation across the endoplasmic reticulum (ER) and functions together with the Sec61 complex and KAR2 in a channel-forming translocon complex. A cycle of assembly and disassembly of Sec62/63 complex from SEC61 may govern the activity of the translocon. SEC66 is required to attach or retain SEC72 in the SEC63 complex. It is essential for growth at elevated temperatures. This Saccharomyces cerevisiae (strain ATCC 204508 / S288c) (Baker's yeast) protein is Translocation protein SEC66 (SEC66).